The following is a 266-amino-acid chain: 3-methyl-2-oxobutanoate hydroxymethyltransferase (266 aa).

Residues Asp-45 and Asp-84 each contribute to the Mg(2+) site. 3-methyl-2-oxobutanoate-binding positions include 45 to 46 (DS), Asp-84, and Lys-112. Glu-114 contacts Mg(2+). The active-site Proton acceptor is Glu-181.

The protein belongs to the PanB family. In terms of assembly, homodecamer; pentamer of dimers. Mg(2+) is required as a cofactor.

It is found in the cytoplasm. The catalysed reaction is 3-methyl-2-oxobutanoate + (6R)-5,10-methylene-5,6,7,8-tetrahydrofolate + H2O = 2-dehydropantoate + (6S)-5,6,7,8-tetrahydrofolate. The protein operates within cofactor biosynthesis; (R)-pantothenate biosynthesis; (R)-pantoate from 3-methyl-2-oxobutanoate: step 1/2. Its function is as follows. Catalyzes the reversible reaction in which hydroxymethyl group from 5,10-methylenetetrahydrofolate is transferred onto alpha-ketoisovalerate to form ketopantoate. This is 3-methyl-2-oxobutanoate hydroxymethyltransferase from Pseudomonas syringae pv. tomato (strain ATCC BAA-871 / DC3000).